A 637-amino-acid polypeptide reads, in one-letter code: DNA mismatch repair protein MutL (637 aa).

Over residues G353–A371 the composition is skewed to polar residues. Residues G353 to D444 form a disordered region. Positions D378–W389 are enriched in basic and acidic residues. Residues P396–G406 show a composition bias toward pro residues. A compositionally biased stretch (basic and acidic residues) spans S430–D444.

Belongs to the DNA mismatch repair MutL/HexB family.

Functionally, this protein is involved in the repair of mismatches in DNA. It is required for dam-dependent methyl-directed DNA mismatch repair. May act as a 'molecular matchmaker', a protein that promotes the formation of a stable complex between two or more DNA-binding proteins in an ATP-dependent manner without itself being part of a final effector complex. This is DNA mismatch repair protein MutL from Beijerinckia indica subsp. indica (strain ATCC 9039 / DSM 1715 / NCIMB 8712).